The following is a 128-amino-acid chain: Probable 4-amino-4-deoxy-L-arabinose-phosphoundecaprenol flippase subunit ArnF (128 aa).

The Cytoplasmic segment spans residues 1 to 2; the sequence is MG. A helical transmembrane segment spans residues 3 to 23; the sequence is LMWGLFSVIIASAAQLSLGFA. The Periplasmic segment spans residues 24-35; the sequence is ASHLPPMTHLWD. Residues 36–56 form a helical membrane-spanning segment; that stretch reads FIAALLAFGLDARILLLGLLG. The Cytoplasmic portion of the chain corresponds to 57–76; it reads YLLSVFCWYKTLHKLALSKA. The helical transmembrane segment at 77–97 threads the bilayer; that stretch reads YALLSMSYVLVWIASMILPGW. Residues 98 to 100 are Periplasmic-facing; sequence EGT. Residues 101-121 form a helical membrane-spanning segment; sequence FSLKALLGVACIMSGLMLIFL. Residues 122-128 are Cytoplasmic-facing; sequence PTTKQRY.

This sequence belongs to the ArnF family. As to quaternary structure, heterodimer of ArnE and ArnF.

It localises to the cell inner membrane. It functions in the pathway bacterial outer membrane biogenesis; lipopolysaccharide biosynthesis. Translocates 4-amino-4-deoxy-L-arabinose-phosphoundecaprenol (alpha-L-Ara4N-phosphoundecaprenol) from the cytoplasmic to the periplasmic side of the inner membrane. The sequence is that of Probable 4-amino-4-deoxy-L-arabinose-phosphoundecaprenol flippase subunit ArnF from Escherichia coli O17:K52:H18 (strain UMN026 / ExPEC).